The chain runs to 73 residues: MAAKTSNLVALLLSLFLLLLSISSQVGLGEAKRNLRNNLRLDCVSHPSPPPPHRSMAPPIFVPPSTSHKGQGP.

The first 31 residues, 1–31 (MAAKTSNLVALLLSLFLLLLSISSQVGLGEA), serve as a signal peptide directing secretion. The interval 44-73 (VSHPSPPPPHRSMAPPIFVPPSTSHKGQGP) is disordered. Positions 59 to 73 (PIFVPPSTSHKGQGP) match the SCOOP motif motif. Polar residues predominate over residues 64–73 (PSTSHKGQGP). A SxS motif essential for MIK2 binding motif is present at residues 65 to 67 (STS).

Belongs to the serine rich endogenous peptide (SCOOP) phytocytokine family. As to quaternary structure, interacts with MIK2 (via extracellular leucine-rich repeat domain); this interaction triggers the formation of complex between MIK2 and the BAK1/SERK3 and SERK4 coreceptors, and subsequent BAK1 activation by phosphorylation. In terms of tissue distribution, mostly expressed in seedlings shoots and leaves, and, to a lower extent, in roots, stems, siliques, seeds and flowers.

Its subcellular location is the cell membrane. It localises to the secreted. The protein localises to the extracellular space. The protein resides in the apoplast. Its function is as follows. Brassicaceae-specific phytocytokine (plant endogenous peptide released into the apoplast) perceived by MIK2 in a BAK1/SERK3 and SERK4 coreceptors-dependent manner, that modulates various physiological and antimicrobial processes including growth prevention and reactive oxygen species (ROS) response regulation. Inhibits root growth and regulates root meristems. Prevents general growth and development. Exhibits antibacterial effects against Pseudomonas syringae pv. tomato DC3000, Ralstonia solanacearum, Bacillus subtilis and Agrobacterium tumefaciens, thus being an antimicrobial peptide (AMP). The protein is Serine rich endogenous peptide 14 of Arabidopsis thaliana (Mouse-ear cress).